A 256-amino-acid chain; its full sequence is Eukaryotic translation initiation factor 3 subunit J (256 aa).

Positions 1–67 (MAAAAAGDSD…KEEAEVKPEV (67 aa)) are sufficient for interaction with EIF3B. The interval 1 to 106 (MAAAAAGDSD…LEEPEEPKVL (106 aa)) is disordered. Residues S9, S11, and S18 each carry the phosphoserine modification. Acidic residues predominate over residues 38 to 57 (EGEDEDEDVKDNWDDDDDEK). Over residues 58-104 (KEEAEVKPEVKISEKKKIAEKIKEKERQQKKRQEEIKKRLEEPEEPK) the composition is skewed to basic and acidic residues. Residues 68–133 (KISEKKKIAE…ESDLELAKET (66 aa)) are a coiled coil. K104 is covalently cross-linked (Glycyl lysine isopeptide (Lys-Gly) (interchain with G-Cter in SUMO2)). T107 carries the phosphothreonine modification. At S125 the chain carries Phosphoserine. Residues 214 to 243 (QSKAKKKKKGVVPGGGLKATMKDDLADYGG) are disordered. The interval 241-256 (YGGYDGGYAQDYEDFM) is promotes stable association with the 40S ribosome. Phosphotyrosine is present on Y252.

The protein belongs to the eIF-3 subunit J family. In terms of assembly, component of the eukaryotic translation initiation factor 3 (eIF-3) complex, which is composed of 13 subunits: EIF3A, EIF3B, EIF3C, EIF3D, EIF3E, EIF3F, EIF3G, EIF3H, EIF3I, EIF3J, EIF3K, EIF3L and EIF3M. The eIF-3 complex appears to include 3 stable modules: module A is composed of EIF3A, EIF3B, EIF3G and EIF3I; module B is composed of EIF3F, EIF3H, and EIF3M; and module C is composed of EIF3C, EIF3D, EIF3E, EIF3K and EIF3L. EIF3C of module C binds EIF3B of module A and EIF3H of module B, thereby linking the three modules. EIF3J is a labile subunit that binds to the eIF-3 complex via EIF3B. The eIF-3 complex interacts with RPS6KB1 under conditions of nutrient depletion. Mitogenic stimulation leads to binding and activation of a complex composed of MTOR and RPTOR, leading to phosphorylation and release of RPS6KB1 and binding of EIF4B to eIF-3. In terms of processing, phosphorylated. Phosphorylation is enhanced upon serum stimulation.

The protein resides in the cytoplasm. Its function is as follows. Component of the eukaryotic translation initiation factor 3 (eIF-3) complex, which is required for several steps in the initiation of protein synthesis. The eIF-3 complex associates with the 40S ribosome and facilitates the recruitment of eIF-1, eIF-1A, eIF-2:GTP:methionyl-tRNAi and eIF-5 to form the 43S pre-initiation complex (43S PIC). The eIF-3 complex stimulates mRNA recruitment to the 43S PIC and scanning of the mRNA for AUG recognition. The eIF-3 complex is also required for disassembly and recycling of post-termination ribosomal complexes and subsequently prevents premature joining of the 40S and 60S ribosomal subunits prior to initiation. The eIF-3 complex specifically targets and initiates translation of a subset of mRNAs involved in cell proliferation, including cell cycling, differentiation and apoptosis, and uses different modes of RNA stem-loop binding to exert either translational activation or repression. This subunit binds directly within the mRNA entry channel of the 40S ribosome to the aminoacyl (A) site. It may regulate the interaction between the 43S PIC and mRNA. This chain is Eukaryotic translation initiation factor 3 subunit J, found in Bos taurus (Bovine).